Here is a 500-residue protein sequence, read N- to C-terminus: Glycerol kinase (500 aa).

Residue T13 coordinates ADP. ATP contacts are provided by T13, T14, and S15. T13 is a sn-glycerol 3-phosphate binding site. Residue R17 participates in ADP binding. Residues R83, E84, Y135, and D245 each coordinate sn-glycerol 3-phosphate. Glycerol contacts are provided by R83, E84, Y135, D245, and Q246. The ADP site is built by T267 and G310. 4 residues coordinate ATP: T267, G310, Q314, and G411. Residues G411 and N415 each contribute to the ADP site.

It belongs to the FGGY kinase family. As to quaternary structure, homotetramer and homodimer (in equilibrium).

The enzyme catalyses glycerol + ATP = sn-glycerol 3-phosphate + ADP + H(+). The protein operates within polyol metabolism; glycerol degradation via glycerol kinase pathway; sn-glycerol 3-phosphate from glycerol: step 1/1. Its activity is regulated as follows. Activated by phosphorylation and inhibited by fructose 1,6-bisphosphate (FBP). Its function is as follows. Key enzyme in the regulation of glycerol uptake and metabolism. Catalyzes the phosphorylation of glycerol to yield sn-glycerol 3-phosphate. The chain is Glycerol kinase from Carboxydothermus hydrogenoformans (strain ATCC BAA-161 / DSM 6008 / Z-2901).